We begin with the raw amino-acid sequence, 88 residues long: UPF0250 protein Sputcn32_2874 (88 aa).

Belongs to the UPF0250 family.

This chain is UPF0250 protein Sputcn32_2874, found in Shewanella putrefaciens (strain CN-32 / ATCC BAA-453).